The chain runs to 877 residues: MLGSLLLLAPLAGAAVIGSRADTKQCPGYKASNVQENDRSLTADLTLAGKPCNTYGTDLQNLKLLVEYQTDERLHVKIYDAEERVYQVPEKVTPRVDSGDGSSKDSALKFEYEEEPFSFTVKRDDEVLFDSSAENLIFQSQYLKLRTWLPENPYLYGLGEHTDPLRLSTTNYTRTFWNRDAYGTPANSNLYGTHPVYYDHRGESGTHGVFLLNSNGMDVFIDKTADGKQYLEYNALGGIFDFYFFTGSNPKEASIEYSKIVGLPAMQSYWTFGLHQCRYGYRDVYQVAEVVYNYTKAGIPLETMWTDIDYMDRRRVFSLDPDRFPLEKMRELVGYLHDHDQHYIVMVDPAVSVSDNGAFNRGLEQDVFLKTQNGSLYKGAVWPGVTAYPDWFHPDIQDYWNSEFSTFFNAETGVDIDGLWIDMNEASNFCPDPCTDPERYSSENNLPPAPPPVRSSSPRPLPGFPADFQPSSASRSQKRIVKAKVGLEGRDLLNPPYKIRNEAGSLSNKTINTGIVHAGEGYAEYDTHNLYGTMMSSSSREAMQYRRPEVRPLVITRSTYAGAGRDVGHWLGDNFSKWEHYRISIAEGLAFASMFQVPMVGADVCGFAGNTTEELCARWASLGAFFTFYRNHNEIGNIGQEFYVWPTVAESARKAIDIRYRLLDYIYTSFYKQSQTGEPFLQPVFYLYPEDENTFSIDLQFFYGDAILVSPVPDKGLTSVDAYFPDDIFYDWYTGTPVRGHGANITLSNIDITHIPLHIRGGSIIPIRSSSAMTTTELREKSFQLIIAPGLDGTASGSLYLDDGDSLEQKATLEVEFEYRKGVLHIDGKFELHASLVESVTLLGQGKGGSRARREDGTKKTIQTNLELSKPTEIKLE.

The first 14 residues, 1-14 (MLGSLLLLAPLAGA), serve as a signal peptide directing secretion. N-linked (GlcNAc...) asparagine glycosylation is found at N171, N293, and N373. Residue D422 is the Nucleophile of the active site. The active site involves E425. The disordered stretch occupies residues 432–476 (DPCTDPERYSSENNLPPAPPPVRSSSPRPLPGFPADFQPSSASRS). Residues 447 to 463 (PPAPPPVRSSSPRPLPG) show a composition bias toward pro residues. A glycan (N-linked (GlcNAc...) asparagine) is linked at N508. D573 (proton donor) is an active-site residue. Residues N574, N610, and N744 are each glycosylated (N-linked (GlcNAc...) asparagine).

The protein belongs to the glycosyl hydrolase 31 family.

It localises to the secreted. It catalyses the reaction Hydrolysis of terminal, non-reducing (1-&gt;4)-linked alpha-D-glucose residues with release of alpha-D-glucose.. The catalysed reaction is Hydrolysis of terminal, non-reducing beta-D-glucosyl residues with release of beta-D-glucose.. In terms of biological role, glucosidase involved in the degradation of cellulosic biomass. Has both alpha- and beta-glucosidase activity. The chain is Probable alpha/beta-glucosidase agdC (agdC) from Aspergillus flavus (strain ATCC 200026 / FGSC A1120 / IAM 13836 / NRRL 3357 / JCM 12722 / SRRC 167).